A 1416-amino-acid chain; its full sequence is K homology domain-containing protein 4 (1416 aa).

Disordered regions lie at residues 25–76 (NPNG…TSMR), 108–174 (KAEA…TRSS), 196–225 (VNSS…LSQS), 255–320 (QNDE…FPGR), and 341–385 (SSLN…MPKP). 3 stretches are compositionally biased toward low complexity: residues 196–213 (VNSS…SANH), 273–285 (QSSF…LDQL), and 341–350 (SSLNPPASGS). Residues 357–369 (GLSSAQPLRSPQP) are compositionally biased toward polar residues. KH domains lie at 412 to 504 (FKST…VILD), 508 to 594 (GLRS…QVSM), 747 to 816 (FEVR…EELP), 817 to 892 (AEMS…SVME), and 900 to 968 (DYIS…DHVP). 2 disordered regions span residues 1215 to 1240 (AGVS…SGHR) and 1289 to 1416 (HASG…FDRA). The span at 1219 to 1239 (VPTSGGIQFPSQPSLHQQSGH) shows a compositional bias: polar residues. The span at 1343 to 1374 (QQQAQQQLQYQQQQQQQQQQQQQPGYGMPHQP) shows a compositional bias: low complexity. Over residues 1391–1402 (RNTQNPDSTTMD) the composition is skewed to polar residues.

RNA-binding protein that recognizes the sequence AUACCC via its tandem KH domains 3 and 4, probably in order to promote mRNA instability. Plays an essential role in filamentous growth and virulence. In Mycosarcoma maydis (Corn smut fungus), this protein is K homology domain-containing protein 4.